We begin with the raw amino-acid sequence, 225 residues long: NAD(P)H-quinone oxidoreductase subunit K, chloroplastic (225 aa).

[4Fe-4S] cluster-binding residues include cysteine 43, cysteine 44, cysteine 108, and cysteine 139.

The protein belongs to the complex I 20 kDa subunit family. In terms of assembly, NDH is composed of at least 16 different subunits, 5 of which are encoded in the nucleus. Requires [4Fe-4S] cluster as cofactor.

It localises to the plastid. The protein resides in the chloroplast thylakoid membrane. It catalyses the reaction a plastoquinone + NADH + (n+1) H(+)(in) = a plastoquinol + NAD(+) + n H(+)(out). The catalysed reaction is a plastoquinone + NADPH + (n+1) H(+)(in) = a plastoquinol + NADP(+) + n H(+)(out). Its function is as follows. NDH shuttles electrons from NAD(P)H:plastoquinone, via FMN and iron-sulfur (Fe-S) centers, to quinones in the photosynthetic chain and possibly in a chloroplast respiratory chain. The immediate electron acceptor for the enzyme in this species is believed to be plastoquinone. Couples the redox reaction to proton translocation, and thus conserves the redox energy in a proton gradient. This chain is NAD(P)H-quinone oxidoreductase subunit K, chloroplastic, found in Arabis hirsuta (Hairy rock-cress).